The chain runs to 202 residues: 3-isopropylmalate dehydratase small subunit 1 (202 aa).

This sequence belongs to the LeuD family. LeuD type 1 subfamily. Heterodimer of LeuC and LeuD.

The enzyme catalyses (2R,3S)-3-isopropylmalate = (2S)-2-isopropylmalate. It functions in the pathway amino-acid biosynthesis; L-leucine biosynthesis; L-leucine from 3-methyl-2-oxobutanoate: step 2/4. In terms of biological role, catalyzes the isomerization between 2-isopropylmalate and 3-isopropylmalate, via the formation of 2-isopropylmaleate. This is 3-isopropylmalate dehydratase small subunit 1 from Bordetella pertussis (strain Tohama I / ATCC BAA-589 / NCTC 13251).